A 526-amino-acid polypeptide reads, in one-letter code: Alpha-1,3-mannosyl-glycoprotein 4-beta-N-acetylglucosaminyltransferase A (526 aa).

Over 1 to 6 (MRLRNG) the chain is Cytoplasmic. The helical; Signal-anchor for type II membrane protein transmembrane segment at 7-27 (TVATALVFVTSFLTLSWYTTW) threads the bilayer. A coiled-coil region spans residues 28 to 63 (QNGKEKLIAYQREFLALKERLRVAEHRISQRSSELN). The Lumenal portion of the chain corresponds to 28–526 (QNGKEKLIAY…NEIHIKKVTS (499 aa)). N-linked (GlcNAc...) asparagine glycosylation is present at asparagine 449. Phosphoserine is present on serine 465.

It belongs to the glycosyltransferase 54 family. A divalent metal cation serves as cofactor. Post-translationally, N-glycosylated.

The protein localises to the golgi apparatus membrane. It is found in the secreted. The enzyme catalyses N(4)-{beta-D-GlcNAc-(1-&gt;2)-alpha-D-Man-(1-&gt;3)-[beta-D-GlcNAc-(1-&gt;2)-alpha-D-Man-(1-&gt;6)]-beta-D-Man-(1-&gt;4)-beta-D-GlcNAc-(1-&gt;4)-beta-D-GlcNAc}-L-asparaginyl-[protein] + UDP-N-acetyl-alpha-D-glucosamine = N(4)-{beta-D-GlcNAc-(1-&gt;2)-[beta-D-GlcNAc-(1-&gt;4)]-alpha-D-Man-(1-&gt;3)-[beta-D-GlcNAc-(1-&gt;2)-alpha-D-Man-(1-&gt;6)]-beta-D-Man-(1-&gt;4)-beta-D-GlcNAc-(1-&gt;4)-beta-D-GlcNAc}-L-asparaginyl-[protein] + UDP + H(+). It carries out the reaction an N(4)-{beta-D-GlcNAc-(1-&gt;2)-alpha-D-Man-(1-&gt;3)-[alpha-D-Man-(1-&gt;6)]-beta-D-Man-(1-&gt;4)-beta-D-GlcNAc-(1-&gt;4)-beta-D-GlcNAc}-L-asparaginyl-[protein] + UDP-N-acetyl-alpha-D-glucosamine = an N(4)-{beta-D-GlcNAc-(1-&gt;2)-[beta-D-GlcNAc-(1-&gt;4)]-alpha-D-Man-(1-&gt;3)-[alpha-D-Man-(1-&gt;6)]-beta-D-Man-(1-&gt;4)-beta-D-GlcNAc-(1-&gt;4)-beta-D-GlcNAc}-L-asparaginyl-[protein] + UDP + H(+). It catalyses the reaction an N(4)-{beta-D-GlcNAc-(1-&gt;2)-alpha-D-Man-(1-&gt;3)-[beta-D-GlcNAc-(1-&gt;2)-[beta-D-GlcNAc-(1-&gt;6)]-alpha-D-Man-(1-&gt;6)]-beta-D-Man-(1-&gt;4)-beta-D-GlcNAc-(1-&gt;4)-beta-D-GlcNAc}-L-asparaginyl-[protein] + UDP-N-acetyl-alpha-D-glucosamine = an N(4)-{beta-D-GlcNAc-(1-&gt;2)-[beta-D-GlcNAc-(1-&gt;4)]-alpha-D-Man-(1-&gt;3)-[beta-D-GlcNAc-(1-&gt;2)-[beta-D-GlcNAc-(1-&gt;6)]-alpha-D-Man-(1-&gt;6)]-beta-D-Man-(1-&gt;4)-beta-D-GlcNAc-(1-&gt;4)-beta-D-GlcNAc}-L-asparaginyl-[protein] + UDP + H(+). The catalysed reaction is an N(4)-{beta-D-GlcNAc-(1-&gt;2)-alpha-D-Man-(1-&gt;3)-[beta-D-GlcNAc-(1-&gt;2)-alpha-D-Man-(1-&gt;6)]-beta-D-Man-(1-&gt;4)-beta-D-GlcNAc-(1-&gt;4)-[alpha-L-Fuc-(1-&gt;6)]-beta-D-GlcNAc}-L-asparaginyl-[protein] + UDP-N-acetyl-alpha-D-glucosamine = N(4)-{beta-D-GlcNAc-(1-&gt;2)-[beta-D-GlcNAc-(1-&gt;4)]-alpha-D-Man-(1-&gt;3)-[beta-D-GlcNAc-(1-&gt;2)-alpha-D-Man-(1-&gt;6)]-beta-D-Man-(1-&gt;4)-beta-D-GlcNAc-(1-&gt;4)-[alpha-L-Fuc-(1-&gt;6)]-beta-D-GlcNAc}-asparaginyl-[protein] + UDP + H(+). The enzyme catalyses an N(4)-{beta-D-GlcNAc-(1-&gt;2)-alpha-D-Man-(1-&gt;3)-[beta-D-Gal-(1-&gt;4)-beta-D-GlcNAc-(1-&gt;2)-alpha-D-Man-(1-&gt;6)]-beta-D-Man-(1-&gt;4)-beta-D-GlcNAc-(1-&gt;4)-beta-D-GlcNAc}-L-asparaginyl-[protein] + UDP-N-acetyl-alpha-D-glucosamine = an N(4)-{beta-D-GlcNAc-(1-&gt;2)-[beta-D-GlcNAc-(1-&gt;4)]-alpha-D-Man-(1-&gt;3)-[beta-D-Gal-(1-&gt;4)-beta-D-GlcNAc-(1-&gt;2)-alpha-D-Man-(1-&gt;6)]-beta-D-Man-(1-&gt;4)-beta-D-GlcNAc-(1-&gt;4)-beta-D-GlcNAc}-L-asparaginyl-[protein] + UDP + H(+). It carries out the reaction N(4)-{beta-D-GlcNAc-(1-&gt;2)-alpha-D-Man-(1-&gt;3)-[alpha-D-Man-(1-&gt;3)-{alpha-D-Man-(1-&gt;6)}-alpha-D-Man-(1-&gt;6)]-beta-D-Man-(1-&gt;4)-beta-D-GlcNAc-(1-&gt;4)-beta-D-GlcNAc}-asparaginyl-[protein] + UDP-N-acetyl-alpha-D-glucosamine = N(4)-{beta-D-GlcNAc-(1-&gt;2)-[beta-D-GlcNAc-(1-&gt;4)]-alpha-D-Man-(1-&gt;3)-[alpha-D-Man-(1-&gt;3)-{alpha-D-Man-(1-&gt;6)}-alpha-D-Man-(1-&gt;6)]-beta-D-Man-(1-&gt;4)-beta-D-GlcNAc-(1-&gt;4)-beta-D-GlcNAc}-asparaginyl-[protein] + UDP + H(+). It catalyses the reaction N(4)-{beta-D-GlcNAc-(1-&gt;2)-alpha-D-Man-(1-&gt;3)-beta-D-Man-(1-&gt;4)-beta-D-GlcNAc-(1-&gt;4)-beta-D-GlcNAc}-asparaginyl-[protein] + UDP-N-acetyl-alpha-D-glucosamine = N(4)-{beta-D-GlcNAc-(1-&gt;2)-[beta-D-GlcNAc-(1-&gt;4)]-alpha-D-Man-(1-&gt;3)-beta-D-Man-(1-&gt;4)-beta-D-GlcNAc-(1-&gt;4)-beta-D-GlcNAc}-asparaginyl-[protein] + UDP + H(+). The protein operates within protein modification; protein glycosylation. With respect to regulation, inhibited by UDP. Its function is as follows. Glycosyltransferase that catalyze the transfer of GlcNAc from UDP-GlcNAc to the GlcNAcbeta1-2Manalpha1-3 arm of the core structure of N-linked glycans through a beta1-4 linkage and participates in the production of tri- and tetra-antennary N-linked sugar chains. Involved in glucose transport by mediating SLC2A2/GLUT2 glycosylation, thereby controlling cell-surface expression of SLC2A2 in pancreatic beta cells. This Rattus norvegicus (Rat) protein is Alpha-1,3-mannosyl-glycoprotein 4-beta-N-acetylglucosaminyltransferase A.